Reading from the N-terminus, the 256-residue chain is Homeobox protein ceh-34 (256 aa).

The segment at residues 134 to 193 (GEETNYCFKSKSRNVLRDAYKKCQYPSVEDKRRLAQQTELSIIQVSNWFKNKRQRERAAG) is a DNA-binding region (homeobox). The disordered stretch occupies residues 187–233 (QRERAAGQLDRSSARSNDSDDGSSGCESKPPMNIDSPAPPPLPTSFD).

The protein belongs to the SIX/Sine oculis homeobox family. Interacts (via N-terminus) with eya-1 (via C-terminus). Shows expression only in the pharyngeal nervous system.

It localises to the nucleus. Its function is as follows. Acts as a transcription regulator. Binds to the sequence motif 5'-TCAGGTT-3'. Binds to the cis-regulatory element of proapoptotic factor egl-1 gene and together with eya-1 activates egl-1 expression to promote motor neuron M4 sister cell apoptosis. Also promotes apoptosis of I1 pharyngeal neuron sister cell. Together with eya-1, required to specify the coelomocyte fate in embryonic and postembryonic precursors. Required to establish and maintain the differentiation of all 14 classes of pharyngeal neurons. Controls the neurotransmitter signaling capacity of the neurons and is required for the expression of some neurotransmitter receptors including mgl-1, glr-2 and ser-7. Affects the neuropeptidergic identity of pharyngeal neurons. Required for the pharyngeal expression of sensory receptors gur-3, glu-7 and str-97, antimicrobial defense genes such as spp-12, gpla-1/flr-2 and htrl-1, and pan-pharyngeal nervous system genes such as kin-36. Required to establish and maintain pharyngeal nervous system architecture by ensuring correct axon and synapse organization. Required for expression of eya-1 which may act as a transcriptional cofactor to specify distinct pharyngeal neuron types. Cooperates with several homeobox proteins to specify distinct pharyngeal neuron types including unc-86 in the NSM and I1 neurons, ceh-14 in the I2 neuron, ceh-2 and pros-1 in the I3 neuron, ceh-45 in the M1 neuron, ceh-2 in the M3 neuron, ceh-28 and zag-1 in the M4 neuron, and vab-15 in the M5 neuron. This Caenorhabditis elegans protein is Homeobox protein ceh-34 (ceh-34).